Here is a 270-residue protein sequence, read N- to C-terminus: UPF0354 protein BC_4690 (270 aa).

Belongs to the UPF0354 family.

The chain is UPF0354 protein BC_4690 from Bacillus cereus (strain ATCC 14579 / DSM 31 / CCUG 7414 / JCM 2152 / NBRC 15305 / NCIMB 9373 / NCTC 2599 / NRRL B-3711).